A 591-amino-acid polypeptide reads, in one-letter code: ATPase family AAA domain-containing protein 3A (591 aa).

The interval 1-52 (MSWLFGIKGPKGEGTGPPLPLPPAQPGAEGGGDRGAGDRPSPKDKWSNFDPT) is disordered. N-acetylserine is present on serine 2. The required for interaction with the inner surface of the mitochondrial outer membrane stretch occupies residues 2-49 (SWLFGIKGPKGEGTGPPLPLPPAQPGAEGGGDRGAGDRPSPKDKWSNF). The Mitochondrial intermembrane segment spans residues 2-245 (SWLFGIKGPK…FRAFVTDWDK (244 aa)). The segment covering 31-47 (GGDRGAGDRPSPKDKWS) has biased composition (basic and acidic residues). Positions 55-216 (ERAAKAAREL…REQIRLKAAE (162 aa)) form a coiled coil. Residues 246 to 263 (VTATVAGLTLLAVGVYSA) traverse the membrane as a helical segment. Over 264 to 586 (KNATSVAGRY…DSQTNKPPHP (323 aa)) the chain is Mitochondrial matrix. Residues 289-304 (RISVLEALRHPIQVSR) form an S100B-binding region. 351–358 (GPPGTGKT) is a binding site for ATP. N6-acetyllysine; alternate is present on lysine 490. Lysine 490 carries the post-translational modification N6-succinyllysine; alternate. N6-acetyllysine occurs at positions 494 and 512. The disordered stretch occupies residues 572–591 (KVERPDSQTNKPPHPSLLSC).

This sequence belongs to the AAA ATPase family. As to quaternary structure, can form homooligomers. Homodimer formation at the N-terminus may be regulated by ATP and is required for the interaction with the inner surface of the mitochondrial outer membrane and correct mitochondrial homeostasis. Interacts with components of the mitochondrial ribosome and with other proteins involved in mitochondrial RNA metabolism. May also interact with protein involved in lipid metabolism, including STARD9. May interact with FAM210A. Interacts with GADD45GIP1. Interacts with S100B in a Ca(+2)- and Zn(+2)-dependent manner; this interaction probably occurs in the cytosol prior to mitochondrial targeting. S100B could assist ATAD3A cytoplasmic processing, preventing aggregation and favoring mitochondrial localization. Interacts with HSP60/HSPD1. Interacts with CLPB. Interacts with EIF2AK3/PERK; ATAD3A and EIF2S1/eIF-2-alpha occupy a common binding site within the cytoplasmic loop of EIF2AK3/PERK, leading to prevent EIF2AK3/PERK association with its substrate EIF2S1/eIF-2-alpha. In terms of tissue distribution, expressed in heart, spleen, kidney, liver and at smaller levels, in lung and muscle (at protein level).

The protein resides in the mitochondrion inner membrane. Its subcellular location is the mitochondrion matrix. The protein localises to the mitochondrion nucleoid. It carries out the reaction ATP + H2O = ADP + phosphate + H(+). In terms of biological role, essential for mitochondrial network organization, mitochondrial metabolism and cell growth at organism and cellular level. May play an important role in mitochondrial protein synthesis. May also participate in mitochondrial DNA replication. May bind to mitochondrial DNA D-loops and contribute to nucleoid stability. Required for enhanced channeling of cholesterol for hormone-dependent steroidogenesis. Involved in mitochondrial-mediated antiviral innate immunity. Required to protect mitochondria from the PERK-mediated unfolded protein response: specifically inhibits the activity of EIF2AK3/PERK at mitochondria-endoplasmic reticulum contact sites, thereby providing a safe haven for mitochondrial protein translation during endoplasmic reticulum stress. Ability to inhibit EIF2AK3/PERK is independent of its ATPase activity. Also involved in the mitochondrial DNA damage response by promoting signaling between damaged genomes and the mitochondrial membrane, leading to activation of the integrated stress response (ISR). The protein is ATPase family AAA domain-containing protein 3A (Atad3a) of Mus musculus (Mouse).